The following is a 196-amino-acid chain: 3-isopropylmalate dehydratase small subunit (196 aa).

The protein belongs to the LeuD family. LeuD type 1 subfamily. Heterodimer of LeuC and LeuD.

The enzyme catalyses (2R,3S)-3-isopropylmalate = (2S)-2-isopropylmalate. It functions in the pathway amino-acid biosynthesis; L-leucine biosynthesis; L-leucine from 3-methyl-2-oxobutanoate: step 2/4. Functionally, catalyzes the isomerization between 2-isopropylmalate and 3-isopropylmalate, via the formation of 2-isopropylmaleate. The protein is 3-isopropylmalate dehydratase small subunit of Herpetosiphon aurantiacus (strain ATCC 23779 / DSM 785 / 114-95).